The primary structure comprises 262 residues: Thiazole synthase (262 aa).

Lys96 acts as the Schiff-base intermediate with DXP in catalysis. 1-deoxy-D-xylulose 5-phosphate-binding positions include Gly157, 184–185 (AG), and 206–207 (NT).

This sequence belongs to the ThiG family. Homotetramer. Forms heterodimers with either ThiH or ThiS.

It is found in the cytoplasm. The enzyme catalyses [ThiS sulfur-carrier protein]-C-terminal-Gly-aminoethanethioate + 2-iminoacetate + 1-deoxy-D-xylulose 5-phosphate = [ThiS sulfur-carrier protein]-C-terminal Gly-Gly + 2-[(2R,5Z)-2-carboxy-4-methylthiazol-5(2H)-ylidene]ethyl phosphate + 2 H2O + H(+). The protein operates within cofactor biosynthesis; thiamine diphosphate biosynthesis. Its function is as follows. Catalyzes the rearrangement of 1-deoxy-D-xylulose 5-phosphate (DXP) to produce the thiazole phosphate moiety of thiamine. Sulfur is provided by the thiocarboxylate moiety of the carrier protein ThiS. In vitro, sulfur can be provided by H(2)S. The protein is Thiazole synthase of Legionella pneumophila (strain Lens).